We begin with the raw amino-acid sequence, 481 residues long: MGKLRPGRVEWLASGHTERPHLFQNLLLFLWALLNCGLGVSAQGPGEWTPWVSWTRCSSSCGRGVSVRSRRCLRLPGEEPCWGDSHEYRLCQLPDCPPGAVPFRDLQCALYNGRPVLGTQKTYQWVPFHGAPNQCDLNCLAEGHAFYHSFGRVLDGTACSPGAQGVCVAGRCLSAGCDGLLGSGALEDRCGRCGGANDSCLFVQRVFRDAGAFAGYWNVTLIPEGARHIRVEHRSRNHLALMGGDGRYVLNGHWVVSPPGTYEAAGTHVVYTRDTGPQETLQAAGPTSHDLLLQVLLQEPNPGIEFEFWLPRERYSPFQARVQALGWPLRQPQPRGVEPQPPAAPAVTPAQTPTLAPDPCPPCPDTRGRAHRLLHYCGSDFVFQARVLGHHHQAQETRYEVRIQLVYKNRSPLRAREYVWAPGHCPCPMLAPHRDYLMAVQRLVSPDGTQDQLLLPHAGYARPWSPAEDSRIRLTARRCPG.

Positions 1 to 42 (MGKLRPGRVEWLASGHTERPHLFQNLLLFLWALLNCGLGVSA) are cleaved as a signal peptide. Residues 45-97 (PGEWTPWVSWTRCSSSCGRGVSVRSRRCLRLPGEEPCWGDSHEYRLCQLPDCP) form the TSP type-1 domain. 3 cysteine pairs are disulfide-bonded: Cys57–Cys91, Cys61–Cys96, and Cys72–Cys81. N-linked (GlcNAc...) asparagine glycosylation is present at Asn218. The tract at residues 331 to 361 (QPQPRGVEPQPPAAPAVTPAQTPTLAPDPCP) is disordered. Low complexity predominate over residues 345–355 (PAVTPAQTPTL). 3 cysteine pairs are disulfide-bonded: Cys360/Cys425, Cys363/Cys427, and Cys377/Cys479. One can recognise an NTR domain in the interval 360-479 (CPPCPDTRGR…SRIRLTARRC (120 aa)).

As to quaternary structure, interacts with heparin, FBN1 and FBN2. Post-translationally, proteolytically cleaved to release a C-terminal fragment containing the NTR domain. In terms of processing, contains at least one additional N-linked glycosylation site.

The protein resides in the secreted. It is found in the extracellular space. Its subcellular location is the extracellular matrix. Its function is as follows. May play a role in modulation of fibrillin microfibrils in the extracellular matrix (ECM). The chain is ADAMTS-like protein 5 (ADAMTSL5) from Homo sapiens (Human).